Reading from the N-terminus, the 347-residue chain is Dihydroorotate dehydrogenase (quinone) (347 aa).

Residues 61–65 (AGLDK) and T85 contribute to the FMN site. Residue K65 participates in substrate binding. 110-114 (NRMGF) contacts substrate. FMN is bound by residues N138 and N171. N171 provides a ligand contact to substrate. The active-site Nucleophile is the S174. N176 contributes to the substrate binding site. FMN contacts are provided by K216 and T244. 245-246 (NT) contributes to the substrate binding site. FMN is bound by residues G267, G296, and 317–318 (YT).

The protein belongs to the dihydroorotate dehydrogenase family. Type 2 subfamily. In terms of assembly, monomer. The cofactor is FMN.

It is found in the cell membrane. The catalysed reaction is (S)-dihydroorotate + a quinone = orotate + a quinol. Its pathway is pyrimidine metabolism; UMP biosynthesis via de novo pathway; orotate from (S)-dihydroorotate (quinone route): step 1/1. Its function is as follows. Catalyzes the conversion of dihydroorotate to orotate with quinone as electron acceptor. The protein is Dihydroorotate dehydrogenase (quinone) of Azotobacter vinelandii (strain DJ / ATCC BAA-1303).